A 181-amino-acid polypeptide reads, in one-letter code: ATP-dependent protease subunit ClpQ (181 aa).

Residue S2 is part of the active site. Residues G165, C168, and T171 each contribute to the Na(+) site.

Belongs to the peptidase T1B family. HslV subfamily. A double ring-shaped homohexamer of ClpQ is capped on each side by a ring-shaped ClpY homohexamer. The assembly of the ClpQ/ClpY complex is dependent on binding of ATP.

Its subcellular location is the cytoplasm. Functionally, protease subunit of a proteasome-like degradation complex. The polypeptide is ATP-dependent protease subunit ClpQ (clpQ) (Bacillus velezensis (strain DSM 23117 / BGSC 10A6 / LMG 26770 / FZB42) (Bacillus amyloliquefaciens subsp. plantarum)).